Here is a 103-residue protein sequence, read N- to C-terminus: NAD(P)H-quinone oxidoreductase subunit 4L (103 aa).

3 helical membrane passes run 5 to 25 (LQYC…GLIT), 32 to 52 (VLMS…GFSN), and 66 to 86 (IFVI…VLAI).

Belongs to the complex I subunit 4L family. NDH-1 can be composed of about 15 different subunits; different subcomplexes with different compositions have been identified which probably have different functions.

It localises to the cellular thylakoid membrane. It carries out the reaction a plastoquinone + NADH + (n+1) H(+)(in) = a plastoquinol + NAD(+) + n H(+)(out). The catalysed reaction is a plastoquinone + NADPH + (n+1) H(+)(in) = a plastoquinol + NADP(+) + n H(+)(out). Functionally, NDH-1 shuttles electrons from an unknown electron donor, via FMN and iron-sulfur (Fe-S) centers, to quinones in the respiratory and/or the photosynthetic chain. The immediate electron acceptor for the enzyme in this species is believed to be plastoquinone. Couples the redox reaction to proton translocation, and thus conserves the redox energy in a proton gradient. Cyanobacterial NDH-1 also plays a role in inorganic carbon-concentration. This Synechocystis sp. (strain ATCC 27184 / PCC 6803 / Kazusa) protein is NAD(P)H-quinone oxidoreductase subunit 4L.